The primary structure comprises 372 residues: NAD(P)H-quinone oxidoreductase subunit 1 (372 aa).

The next 8 helical transmembrane spans lie at 27–47 (LLWLPLPMLLVLTAALIGVLV), 97–117 (LLFTLGPVLVLIPVILSWLII), 128–148 (VGIGIFLWIALSSIQPIGLLM), 176–196 (LALAVLAIVMMSNSLSTIDIV), 204–224 (FLSWNIWRQPVGFLIFWICAL), 270–290 (LLVSVLYLGGWGFPIPVELIA), 308–328 (SLGIVMTVFKTYLLVFLAILL), and 351–371 (ISLVNLLFTAALKLVFPFAFG).

It belongs to the complex I subunit 1 family. In terms of assembly, NDH-1 is composed of at least 11 different subunits.

Its subcellular location is the cellular thylakoid membrane. The enzyme catalyses a plastoquinone + NADH + (n+1) H(+)(in) = a plastoquinol + NAD(+) + n H(+)(out). It catalyses the reaction a plastoquinone + NADPH + (n+1) H(+)(in) = a plastoquinol + NADP(+) + n H(+)(out). Its function is as follows. NDH-1 shuttles electrons from an unknown electron donor, via FMN and iron-sulfur (Fe-S) centers, to quinones in the respiratory and/or the photosynthetic chain. The immediate electron acceptor for the enzyme in this species is believed to be plastoquinone. Couples the redox reaction to proton translocation, and thus conserves the redox energy in a proton gradient. This chain is NAD(P)H-quinone oxidoreductase subunit 1, found in Prochlorococcus marinus (strain SARG / CCMP1375 / SS120).